The primary structure comprises 401 residues: Dual-specificity RNA methyltransferase RlmN (401 aa).

Catalysis depends on Glu-114, which acts as the Proton acceptor. One can recognise a Radical SAM core domain in the interval Asp-120 to Asp-365. Cysteines 127 and 370 form a disulfide. [4Fe-4S] cluster contacts are provided by Cys-134, Cys-138, and Cys-141. S-adenosyl-L-methionine is bound by residues Gly-187–Glu-188, Ser-219, Ser-241–His-243, and Asn-327. Cys-370 (S-methylcysteine intermediate) is an active-site residue.

The protein belongs to the radical SAM superfamily. RlmN family. [4Fe-4S] cluster serves as cofactor.

It localises to the cytoplasm. It catalyses the reaction adenosine(2503) in 23S rRNA + 2 reduced [2Fe-2S]-[ferredoxin] + 2 S-adenosyl-L-methionine = 2-methyladenosine(2503) in 23S rRNA + 5'-deoxyadenosine + L-methionine + 2 oxidized [2Fe-2S]-[ferredoxin] + S-adenosyl-L-homocysteine. The catalysed reaction is adenosine(37) in tRNA + 2 reduced [2Fe-2S]-[ferredoxin] + 2 S-adenosyl-L-methionine = 2-methyladenosine(37) in tRNA + 5'-deoxyadenosine + L-methionine + 2 oxidized [2Fe-2S]-[ferredoxin] + S-adenosyl-L-homocysteine. Its function is as follows. Specifically methylates position 2 of adenine 2503 in 23S rRNA and position 2 of adenine 37 in tRNAs. m2A2503 modification seems to play a crucial role in the proofreading step occurring at the peptidyl transferase center and thus would serve to optimize ribosomal fidelity. The sequence is that of Dual-specificity RNA methyltransferase RlmN from Stenotrophomonas maltophilia (strain K279a).